The chain runs to 339 residues: Ketol-acid reductoisomerase (NADP(+)) (339 aa).

The KARI N-terminal Rossmann domain occupies 1–182 (MRVYYDRDAD…GGGRSGVIET (182 aa)). Residues 24–27 (YGSQ), Arg48, Ser51, Thr53, and 83–86 (DELQ) each bind NADP(+). His108 is a catalytic residue. Gly134 serves as a coordination point for NADP(+). The KARI C-terminal knotted domain occupies 183-328 (NFREECETDL…GRLRAMMPWI (146 aa)). Mg(2+)-binding residues include Asp191, Glu195, Glu227, and Glu231. Ser252 lines the substrate pocket.

It belongs to the ketol-acid reductoisomerase family. The cofactor is Mg(2+).

The enzyme catalyses (2R)-2,3-dihydroxy-3-methylbutanoate + NADP(+) = (2S)-2-acetolactate + NADPH + H(+). The catalysed reaction is (2R,3R)-2,3-dihydroxy-3-methylpentanoate + NADP(+) = (S)-2-ethyl-2-hydroxy-3-oxobutanoate + NADPH + H(+). It participates in amino-acid biosynthesis; L-isoleucine biosynthesis; L-isoleucine from 2-oxobutanoate: step 2/4. It functions in the pathway amino-acid biosynthesis; L-valine biosynthesis; L-valine from pyruvate: step 2/4. Its function is as follows. Involved in the biosynthesis of branched-chain amino acids (BCAA). Catalyzes an alkyl-migration followed by a ketol-acid reduction of (S)-2-acetolactate (S2AL) to yield (R)-2,3-dihydroxy-isovalerate. In the isomerase reaction, S2AL is rearranged via a Mg-dependent methyl migration to produce 3-hydroxy-3-methyl-2-ketobutyrate (HMKB). In the reductase reaction, this 2-ketoacid undergoes a metal-dependent reduction by NADPH to yield (R)-2,3-dihydroxy-isovalerate. In Phenylobacterium zucineum (strain HLK1), this protein is Ketol-acid reductoisomerase (NADP(+)).